Reading from the N-terminus, the 1778-residue chain is Ankyrin repeat domain-containing protein 36C (1778 aa).

5 ANK repeats span residues 64–93 (KERT…ELNL), 97–126 (EDRT…DPNI), 130–159 (FGRT…NIEE), 163–192 (DEYP…NINA), and 196–225 (LGRS…DVFS). 5 disordered regions span residues 260–365 (LSIN…DEQK), 501–526 (ALPA…VKDS), 538–653 (DSLT…QKQS), 671–1027 (RITG…QKQL), and 1051–1072 (IRGT…EKDS). Polar residues-rich tracts occupy residues 261–272 (SINSNPVSSQKQ) and 297–306 (KSGTVSSQKQ). The span at 539–555 (SLTSSEESSERPPLSTL) shows a compositional bias: low complexity. Basic and acidic residues-rich tracts occupy residues 585 to 596 (PAEKATSDDKDS) and 619 to 630 (PAEKATSDEKDS). 2 stretches are compositionally biased toward polar residues: residues 631-653 (VSNI…QKQS) and 679-691 (GTVS…PSKA). Over residues 794-813 (TSDEKDSFSNITREKKDGEI) the composition is skewed to basic and acidic residues. At Ser829 the chain carries Phosphoserine. Composition is skewed to basic and acidic residues over residues 840-849 (RGKEDGEKTR) and 862-881 (TSDE…DGET). Ser897 is subject to Phosphoserine. The span at 907 to 917 (AREKKDGEKSR) shows a compositional bias: basic and acidic residues. The segment covering 942–955 (RGKKHGEKTRRVSS) has biased composition (basic residues). Polar residues-rich tracts occupy residues 983 to 992 (ISGTVSSQKQ) and 1005 to 1026 (VSNI…SQKQ). Coiled coils occupy residues 1157 to 1187 (EQDL…QIHS), 1247 to 1333 (ELKD…YRIE), 1362 to 1480 (SETD…DHDQ), and 1544 to 1768 (VFEH…ILQH).

It belongs to the ANKRD36 family.

The chain is Ankyrin repeat domain-containing protein 36C (ANKRD36C) from Homo sapiens (Human).